We begin with the raw amino-acid sequence, 348 residues long: Rhodopsin (348 aa).

M1 bears the N-acetylmethionine mark. The Extracellular portion of the chain corresponds to 1-36 (MNGTEGPNFYVPFSNKTGVVRSPFEAPQYYLAEPWQ). Residues N2 and N15 are each glycosylated (N-linked (GlcNAc...) asparagine). A helical transmembrane segment spans residues 37–61 (FSMLAAYMFLLIVLGFPINFLTLYV). Topologically, residues 62 to 73 (TVQHKKLRTPLN) are cytoplasmic. Residues 74-96 (YILLNLAVADLFMVFGGFTTTLY) form a helical membrane-spanning segment. Topologically, residues 97–110 (TSLHGYFVFGPTGC) are extracellular. C110 and C187 are joined by a disulfide. A helical membrane pass occupies residues 111–133 (NLEGFFATLGGEIALWSLVVLAI). A 'Ionic lock' involved in activated form stabilization motif is present at residues 134 to 136 (ERY). Topologically, residues 134 to 152 (ERYVVVCKPMSNFRFGENH) are cytoplasmic. Residues 153–173 (AIMGVAFTWVMALACAAPPLV) form a helical membrane-spanning segment. Over 174-202 (GWSRYIPQGMQCSCGALYFTLKPEINNES) the chain is Extracellular. E201 provides a ligand contact to Zn(2+). A helical membrane pass occupies residues 203 to 224 (FVIYMFVVHFSIPLIVIFFCYG). Residues 225–252 (QLVFTVKEAAAQQQESATTQKAEKEVTR) lie on the Cytoplasmic side of the membrane. Residues 253–274 (MVIIMVIAFLICWLPYAGVAFY) traverse the membrane as a helical segment. Topologically, residues 275–286 (IFTHQGSDFGPI) are extracellular. Q279 is a Zn(2+) binding site. A helical membrane pass occupies residues 287-308 (FMTIPAFFAKSSSVYNPVIYIM). The residue at position 296 (K296) is an N6-(retinylidene)lysine. The Cytoplasmic portion of the chain corresponds to 309–348 (MNKQFRNCMLTTLCCGKNPLGDDEASTTVSKTETSQVAPA). 2 S-palmitoyl cysteine lipidation sites follow: C322 and C323. The segment at 330 to 348 (DDEASTTVSKTETSQVAPA) is interaction with SAG. At S334 the chain carries Phosphoserine. Residue S334 is modified to Phosphoserine; by RK and GRK7. T335 and T336 each carry phosphothreonine. Phosphothreonine; by RK and GRK7 occurs at positions 335 and 336. S338 carries the phosphoserine; by RK and GRK7 modification. T340 and T342 each carry phosphothreonine. At S343 the chain carries Phosphoserine; by RK and GRK7.

The protein belongs to the G-protein coupled receptor 1 family. Opsin subfamily. In terms of assembly, homodimer. May form a complex composed of RHO, GRK1 and RCVRN in a Ca(2+)-dependent manner; RCVRN prevents the interaction between GRK1 and RHO. Interacts with GRK1. Interacts (phosphorylated form) with SAG. Interacts with GNAT1. Interacts with GNAT3. SAG and G-proteins compete for a common binding site. Interacts with PRCD; the interaction promotes PRCD stability. Forms a complex with ASAP1 and ARF4. Forms a complex with ASAP1, RAB11A, Rabin8/RAB3IP, ARF4 and RAB11FIP3; the complex regulates Golgi-to-cilia rhodopsin/RHO transport in photoreceptors. In terms of processing, phosphorylated on some or all of the serine and threonine residues present in the C-terminal region. Post-translationally, contains one covalently linked retinal chromophore. Upon light absorption, the covalently bound 11-cis-retinal is converted to all-trans-retinal. After hydrolysis of the Schiff base and release of the covalently bound all-trans-retinal, active rhodopsin is regenerated by binding of a fresh molecule of 11-cis-retinal.

It localises to the membrane. The protein localises to the cell projection. Its subcellular location is the cilium. The protein resides in the photoreceptor outer segment. In terms of biological role, photoreceptor required for image-forming vision at low light intensity. Required for photoreceptor cell viability after birth. Light-induced isomerization of 11-cis to all-trans retinal triggers a conformational change that activates signaling via G-proteins. Subsequent receptor phosphorylation mediates displacement of the bound G-protein alpha subunit by the arrestin SAG and terminates signaling. The protein is Rhodopsin (RHO) of Ovis aries (Sheep).